A 251-amino-acid polypeptide reads, in one-letter code: Flap endonuclease Xni (251 aa).

Asp-104 lines the Mg(2+) pocket. One can recognise a 5'-3' exonuclease domain in the interval Val-160–Leu-249. Leu-171, Ala-172, Pro-180, Val-182, and Ile-185 together coordinate K(+). The interaction with DNA stretch occupies residues Gly-184–Ser-189.

This sequence belongs to the Xni family. Mg(2+) is required as a cofactor. K(+) serves as cofactor.

Has flap endonuclease activity. During DNA replication, flap endonucleases cleave the 5'-overhanging flap structure that is generated by displacement synthesis when DNA polymerase encounters the 5'-end of a downstream Okazaki fragment. The polypeptide is Flap endonuclease Xni (Salmonella paratyphi A (strain ATCC 9150 / SARB42)).